An 86-amino-acid chain; its full sequence is CRISPR-associated endoribonuclease Cas2 (86 aa).

Asp8 contributes to the Mg(2+) binding site.

The protein belongs to the CRISPR-associated endoribonuclease Cas2 protein family. Homodimer, forms a heterotetramer with a Cas1 homodimer. The cofactor is Mg(2+).

CRISPR (clustered regularly interspaced short palindromic repeat), is an adaptive immune system that provides protection against mobile genetic elements (viruses, transposable elements and conjugative plasmids). CRISPR clusters contain sequences complementary to antecedent mobile elements and target invading nucleic acids. CRISPR clusters are transcribed and processed into CRISPR RNA (crRNA). Functions as a ssRNA-specific endoribonuclease. Involved in the integration of spacer DNA into the CRISPR cassette. Plasmid targeted by CRISPR locus P1 transform wild-type cells very poorly. This Haloferax volcanii (strain ATCC 29605 / DSM 3757 / JCM 8879 / NBRC 14742 / NCIMB 2012 / VKM B-1768 / DS2) (Halobacterium volcanii) protein is CRISPR-associated endoribonuclease Cas2.